The chain runs to 343 residues: MAKKILLCDPTLRDGNHAVRHQLTRESFAAYCQAAEAANVPVVEVGHGNGLGASSMLVGECLLSDEDIFTISREHLHKSRMAIHLIPGFCTIKKDLTRALELGVDLFRVASHCTEADITDRHIHFVRNSGKEAWGILMMSHMTSPAVLLEEARKMESYGAEAIVIMDSAGAYFPDDVKERISTLVNGLTVPVGFHGHNNLGMSVINSVVAVQEGATIIDGTIRGFGAGAGNTQLEVLVAVFERLGYETGIDLYKILDAADIAEKGFNPVAPSISPLSIVSGLAGVFSGFAKPVAKAAKDYNVDPRDIFFGLGERKAVAGQESLIYEVARDLAKRNENSVEKGQ.

Residues 5-256 (ILLCDPTLRD…ETGIDLYKIL (252 aa)) form the Pyruvate carboxyltransferase domain. 13–14 (RD) lines the substrate pocket. Residue aspartate 14 participates in Mn(2+) binding. Histidine 17 serves as the catalytic Proton acceptor. Positions 168 and 195 each coordinate substrate. Mn(2+)-binding residues include histidine 195 and histidine 197.

The protein belongs to the 4-hydroxy-2-oxovalerate aldolase family. In terms of assembly, interacts with MhpF.

It catalyses the reaction (S)-4-hydroxy-2-oxopentanoate = acetaldehyde + pyruvate. The protein operates within aromatic compound metabolism; 3-phenylpropanoate degradation. Functionally, catalyzes the retro-aldol cleavage of 4-hydroxy-2-oxopentanoate to pyruvate and acetaldehyde. Is involved in the meta-cleavage pathway for the degradation of aromatic compounds. In Pectobacterium atrosepticum (strain SCRI 1043 / ATCC BAA-672) (Erwinia carotovora subsp. atroseptica), this protein is 4-hydroxy-2-oxovalerate aldolase.